A 409-amino-acid chain; its full sequence is MSESIDRVFVKAIGTIRTLSSRTGYGGLPRPPIENRVKLYGLYKQATEGDVAGVMERPLGDSPEAEAAKRKWDAWRSEQGTSKTEAKRQYISYLIDTMKQFASDTTEARELLSELEYLWNQISDVSPNDSSDSESNAGPAQLLQNHAQLLSRDISVVDDPITSSGMDPMYNPSFQRHNSSRFINASTAERLNSLSNYYSNLNPTPPLSSRRYQGSVTPRNVDFIKWQNDINNSINKLNHDLQLLANRRLQSSASDPLYSKRGSDLTHDDFVNDISSSSSNRRFRARRNQPLVSKVLLGTISLLLKLIKTVIKHVAIDAVIIAVLVAVIKRSIIIPNLISNEISLQKIHHSELESNSSIKGDSNGGRLTIVLPFINGKDFFQENSLLGKLLKVFHDYVDHVSRIRLIKRN.

Over 1–313 the chain is Cytoplasmic; the sequence is MSESIDRVFV…LKLIKTVIKH (313 aa). The 99-residue stretch at 5–103 folds into the ACB domain; sequence IDRVFVKAIG…LIDTMKQFAS (99 aa). A helical membrane pass occupies residues 314 to 334; the sequence is VAIDAVIIAVLVAVIKRSIII. The Peroxisomal segment spans residues 335-409; that stretch reads PNLISNEISL…VSRIRLIKRN (75 aa).

This sequence belongs to the ATG37 family. In terms of assembly, interacts with ATG30 and PEX3. Post-translationally, phosphorylated.

It is found in the peroxisome membrane. In terms of biological role, acyl-CoA binding protein which acts as the peroxisome receptor for pexophagy. Required for both micropexophagy and macropexophagy, but not for the cytoplasm to vacuole transport (Cvt) or autophagy pathways. Required for functional micropexophagic apparatus (MIPA) and relocation of ATG11 to the peroxisome-sequestering arms of the vacuole. Binds palmitoyl-CoA but not oleyl-CoA. The protein is Autophagy-related protein 37 of Komagataella phaffii (strain GS115 / ATCC 20864) (Yeast).